Reading from the N-terminus, the 139-residue chain is MFPLVLSLFLGATSDIWPLAPAEAFQLPPCQLINQTVSLEKEGCPKCHPVETTICSGHCITKDPVIKIPFSNVYQHVCTYRDLHYKTFELPDCPPGVDPTVTYPVAQSCHCGRCAMDTSDCTFESLQPNFCMNDIPFYY.

Residues Met-1–Ala-24 form the signal peptide. 6 disulfide bridges follow: Cys-30–Cys-78, Cys-44–Cys-93, Cys-47–Cys-131, Cys-55–Cys-109, Cys-59–Cys-111, and Cys-114–Cys-121. A glycan (N-linked (GlcNAc...) asparagine) is linked at Asn-34.

The protein belongs to the glycoprotein hormones subunit beta family. As to quaternary structure, heterodimer of an alpha and a beta chain.

Its subcellular location is the secreted. Involved in gametogenesis and steroidogenesis. This is Gonadotropin subunit beta-2 (cgbb) from Morone saxatilis (Striped bass).